Here is a 420-residue protein sequence, read N- to C-terminus: Glutamate dehydrogenase (420 aa).

Residue K105 is part of the active site. 220–226 (GYGNAGY) provides a ligand contact to NAD(+).

This sequence belongs to the Glu/Leu/Phe/Val dehydrogenases family. Homohexamer.

It is found in the cytoplasm. It catalyses the reaction L-glutamate + NAD(+) + H2O = 2-oxoglutarate + NH4(+) + NADH + H(+). The catalysed reaction is L-glutamate + NADP(+) + H2O = 2-oxoglutarate + NH4(+) + NADPH + H(+). The protein is Glutamate dehydrogenase (gdhA) of Pyrococcus abyssi (strain GE5 / Orsay).